Here is a 130-residue protein sequence, read N- to C-terminus: Capsid protein (130 aa).

The viral RNA-binding stretch occupies residues 31 to 104 (EWLSNNSRSQ…FAATDDVTVI (74 aa)).

Belongs to the Leviviricetes capsid protein family. In terms of assembly, homodimer. The capsid proteins form dimers that assemble by group of 5. Twelve such pentamers are linked together with free dimers. The homodimers binds to the viral RNA via an operator hairpin, but also to many other RNA sequences in the viral genome; this interaction probably shifts the virus from the replicative to the assembly phase and ensures specific encapsidation of the viral genome.

It localises to the virion. Its function is as follows. Capsid protein self-assembles to form an icosahedral capsid with a T=3 symmetry, about 26 nm in diameter, and consisting of 89 capsid proteins dimers (178 capsid proteins). Involved in viral genome encapsidation through the interaction between a capsid protein dimer and the multiple packaging signals present in the RNA genome. The capsid also contains 1 copy of the A2 maturation protein. Acts as a translational repressor of viral replicase synthesis late in infection. This latter function is the result of capsid protein interaction with an RNA hairpin which contains the replicase ribosome-binding site. The protein is Capsid protein of Escherichia coli (Bacteriophage JP34).